The sequence spans 348 residues: Dihydroorotase (348 aa).

Zn(2+) contacts are provided by H17 and H19. Substrate-binding positions include 19-21 (HLR) and N45. Residues K103, H140, and H178 each coordinate Zn(2+). Position 103 is an N6-carboxylysine (K103). H140 is a substrate binding site. A substrate-binding site is contributed by L223. A Zn(2+)-binding site is contributed by D251. D251 is an active-site residue. Positions 255 and 267 each coordinate substrate.

Belongs to the metallo-dependent hydrolases superfamily. DHOase family. Class II DHOase subfamily. In terms of assembly, homodimer. Zn(2+) serves as cofactor.

The catalysed reaction is (S)-dihydroorotate + H2O = N-carbamoyl-L-aspartate + H(+). The protein operates within pyrimidine metabolism; UMP biosynthesis via de novo pathway; (S)-dihydroorotate from bicarbonate: step 3/3. Catalyzes the reversible cyclization of carbamoyl aspartate to dihydroorotate. In Salmonella dublin (strain CT_02021853), this protein is Dihydroorotase.